The following is a 586-amino-acid chain: Protein translocase subunit SecD (586 aa).

Helical transmembrane passes span 7 to 27 (LILI…TLKW), 418 to 438 (SALA…LSGV), 439 to 459 (VAGF…LSAF), 465 to 485 (LTSI…NIVI), 521 to 541 (TFIA…GFAW), and 546 to 566 (GIVA…EFII).

Belongs to the SecD/SecF family. SecD subfamily. As to quaternary structure, forms a complex with SecF. Part of the essential Sec protein translocation apparatus which comprises SecA, SecYEG and auxiliary proteins SecDF. Other proteins may also be involved.

The protein resides in the cell inner membrane. In terms of biological role, part of the Sec protein translocase complex. Interacts with the SecYEG preprotein conducting channel. SecDF uses the proton motive force (PMF) to complete protein translocation after the ATP-dependent function of SecA. The polypeptide is Protein translocase subunit SecD (Borreliella burgdorferi (strain ATCC 35210 / DSM 4680 / CIP 102532 / B31) (Borrelia burgdorferi)).